The chain runs to 680 residues: Glutamine-dependent NAD(+) synthetase (680 aa).

The CN hydrolase domain maps to 12 to 276 (VRVAACTHHA…EHRSVADVDT (265 aa)). Glu-52 functions as the Proton acceptor; for glutaminase activity in the catalytic mechanism. The active-site For glutaminase activity is Lys-121. Tyr-127 contacts L-glutamine. Catalysis depends on Cys-176, which acts as the Nucleophile; for glutaminase activity. 2 residues coordinate L-glutamine: Ser-203 and Arg-209. 366 to 373 (GVSGGLDS) is an ATP binding site. Asn-456 contacts deamido-NAD(+). Thr-480 serves as a coordination point for ATP. Residues Glu-485, 490–493 (WSTY), and Lys-636 contribute to the deamido-NAD(+) site.

This sequence in the C-terminal section; belongs to the NAD synthetase family.

It carries out the reaction deamido-NAD(+) + L-glutamine + ATP + H2O = L-glutamate + AMP + diphosphate + NAD(+) + H(+). The protein operates within cofactor biosynthesis; NAD(+) biosynthesis; NAD(+) from deamido-NAD(+) (L-Gln route): step 1/1. Functionally, catalyzes the ATP-dependent amidation of deamido-NAD to form NAD. Uses L-glutamine as a nitrogen source. The polypeptide is Glutamine-dependent NAD(+) synthetase (Mycobacterium leprae (strain TN)).